A 140-amino-acid chain; its full sequence is 6,7-dimethyl-8-ribityllumazine synthase (140 aa).

Residues F11, 42–44 (ALE), and 66–68 (VVI) each bind 5-amino-6-(D-ribitylamino)uracil. Position 71–72 (71–72 (ET)) interacts with (2S)-2-hydroxy-3-oxobutyl phosphate. Catalysis depends on H74, which acts as the Proton donor. Residue N98 coordinates 5-amino-6-(D-ribitylamino)uracil. R112 provides a ligand contact to (2S)-2-hydroxy-3-oxobutyl phosphate.

The protein belongs to the DMRL synthase family.

It carries out the reaction (2S)-2-hydroxy-3-oxobutyl phosphate + 5-amino-6-(D-ribitylamino)uracil = 6,7-dimethyl-8-(1-D-ribityl)lumazine + phosphate + 2 H2O + H(+). Its pathway is cofactor biosynthesis; riboflavin biosynthesis; riboflavin from 2-hydroxy-3-oxobutyl phosphate and 5-amino-6-(D-ribitylamino)uracil: step 1/2. Functionally, catalyzes the formation of 6,7-dimethyl-8-ribityllumazine by condensation of 5-amino-6-(D-ribitylamino)uracil with 3,4-dihydroxy-2-butanone 4-phosphate. This is the penultimate step in the biosynthesis of riboflavin. The polypeptide is 6,7-dimethyl-8-ribityllumazine synthase (Erythrobacter litoralis (strain HTCC2594)).